The primary structure comprises 266 residues: Sesquipedalian-1 (266 aa).

The 97-residue stretch at 17-113 folds into the PH domain; that stretch reads PVDNAGFLYK…WVKALSRASF (97 aa). The segment at 165–184 is disordered; that stretch reads QPSVAPQRPPPLPPRRRASA. S183 is subject to Phosphoserine. The F&amp;H signature appears at 191–203; sequence SFAQLHARYGLEV.

The protein belongs to the sesquipedalian family. Forms homodimers and heterodimers with PHETA2. Interacts with OCRL and INPP5B. Interaction with OCRL may be important for endosomal morphology and function.

The protein resides in the early endosome. The protein localises to the recycling endosome. Its subcellular location is the golgi apparatus. It localises to the trans-Golgi network. It is found in the cytoplasmic vesicle. The protein resides in the clathrin-coated vesicle. Its function is as follows. Plays a role in endocytic trafficking. Required for receptor recycling from endosomes, both to the trans-Golgi network and the plasma membrane. This Mus musculus (Mouse) protein is Sesquipedalian-1.